Reading from the N-terminus, the 436-residue chain is 3-ketoacyl-CoA thiolase (436 aa).

Residue Cys-99 is the Acyl-thioester intermediate of the active site. Residues His-392 and Cys-422 each act as proton acceptor in the active site.

Belongs to the thiolase-like superfamily. Thiolase family. As to quaternary structure, heterotetramer of two alpha chains (FadJ) and two beta chains (FadI).

It localises to the cytoplasm. It carries out the reaction an acyl-CoA + acetyl-CoA = a 3-oxoacyl-CoA + CoA. It participates in lipid metabolism; fatty acid beta-oxidation. In terms of biological role, catalyzes the final step of fatty acid oxidation in which acetyl-CoA is released and the CoA ester of a fatty acid two carbons shorter is formed. The chain is 3-ketoacyl-CoA thiolase from Salmonella dublin (strain CT_02021853).